We begin with the raw amino-acid sequence, 1360 residues long: Ubiquitin carboxyl-terminal hydrolase 19 (1360 aa).

Residues 1–46 (MSAGASATGPRRGPPGLEEATSKKKQKDRANLESKDGDARRVSLPR) form a disordered region. The Cytoplasmic portion of the chain corresponds to 1-1333 (MSAGASATGP…TTPDEGCLRY (1333 aa)). Positions 28-46 (DRANLESKDGDARRVSLPR) are enriched in basic and acidic residues. Residues 51–140 (KDELLLDWRQ…VPLLTWPSLL (90 aa)) enclose the CS 1 domain. The interval 163–239 (PIALEPGSEP…APSFLSDSAT (77 aa)) is disordered. Basic and acidic residues predominate over residues 170 to 181 (SEPRRAKQEARN). Residues 189–199 (GEVGSGAGPGT) show a composition bias toward gly residues. Serine 220 bears the Phosphoserine mark. In terms of domain architecture, CS 2 spans 322–424 (LAFVKNDSYE…RQSQRWGGLE (103 aa)). The tract at residues 432-482 (VGGAKVAVPTGPTPLDSTPPGGGPHPLTGQEEARAVEKEKPKARSEDSGLD) is disordered. Over residues 462-478 (EEARAVEKEKPKARSED) the composition is skewed to basic and acidic residues. In terms of domain architecture, USP spans 539–1256 (TGLVNLGNTC…YAYVLFYRRR (718 aa)). The active-site Nucleophile is the cysteine 548. Residues cysteine 833, cysteine 836, cysteine 850, cysteine 853, cysteine 859, cysteine 863, histidine 871, and cysteine 875 each coordinate Zn(2+). An MYND-type zinc finger spans residues 833–875 (CAACQRKQQSEEEKLKRCTRCYRVGYCNQFCQKTHWPDHKGLC). The interval 965–988 (DTGAHRVWPPADRGPVPSTSGLSS) is disordered. Residue histidine 1207 is the Proton acceptor of the active site. Residues 1259–1274 (PVERPPRASHSEHHPD) show a composition bias toward basic and acidic residues. Residues 1259–1281 (PVERPPRASHSEHHPDLGPAAEA) are disordered. A helical transmembrane segment spans residues 1334–1354 (FVLGTVAALVALVLNVFYPLV). Residues 1355 to 1360 (SQSRWR) lie on the Lumenal side of the membrane.

Interacts with RNF123. Interacts with BIRC2/c-IAP1, BIRC3/c-IAP2 and XIAP/BIRC4. Interacts with HIF1A (via N-terminus).

It is found in the endoplasmic reticulum membrane. The catalysed reaction is Thiol-dependent hydrolysis of ester, thioester, amide, peptide and isopeptide bonds formed by the C-terminal Gly of ubiquitin (a 76-residue protein attached to proteins as an intracellular targeting signal).. Functionally, deubiquitinating enzyme that regulates the degradation of various proteins by removing ubiquitin moieties, thereby preventing their proteasomal degradation. Stabilizes RNF123, which promotes CDKN1B degradation and contributes to cell proliferation. Decreases the levels of ubiquitinated proteins during skeletal muscle formation and acts to repress myogenesis. Modulates transcription of major myofibrillar proteins. Also involved in turnover of endoplasmic-reticulum-associated degradation (ERAD) substrates. Mechanistically, deubiquitinates and thereby stabilizes several E3 ligases involved in the ERAD pathway including SYVN1 or MARCHF6. Regulates the stability of other E3 ligases including BIRC2/c-IAP1 and BIRC3/c-IAP2 by preventing their ubiquitination. Required for cells to mount an appropriate response to hypoxia by rescuing HIF1A from degradation in a non-catalytic manner and by mediating the deubiquitination of FUNDC1. Attenuates mitochondrial damage and ferroptosis by targeting and stabilizing NADPH oxidase 4/NOX4. Negatively regulates TNF-alpha- and IL-1beta-triggered NF-kappa-B activation by hydrolyzing 'Lys-27'- and 'Lys-63'-linked polyubiquitin chains from MAP3K7. Modulates also the protein level and aggregation of polyQ-expanded huntingtin/HTT through HSP90AA1. The polypeptide is Ubiquitin carboxyl-terminal hydrolase 19 (Usp19) (Mus musculus (Mouse)).